Reading from the N-terminus, the 561-residue chain is TBC1 domain family member 24 (561 aa).

A 1,2-diacyl-sn-glycero-3-phospho-(1D-myo-inositol) contacts are provided by Lys36 and Arg40. Residues 45–236 (AQSHTLRGKV…RVFDVFLVEG (192 aa)) form the Rab-GAP TBC domain. A 1,2-diacyl-sn-glycero-3-phospho-(1D-myo-inositol) contacts are provided by residues Lys238, Arg242, and 293-297 (RLFSR). The TLDc domain maps to 343 to 556 (EIVSVKEMRD…IAAVEAWGFQ (214 aa)). A phosphoserine mark is found at Ser475 and Ser482.

In terms of assembly, interacts with ARF6. Expressed in brain, particularly at the level of the cortex and the hippocampus. Expressed in the inner ear in spiral ganglion cells, a collection of neurons critical for hearing and balance.

It localises to the cell membrane. The protein resides in the cytoplasm. The protein localises to the cytoplasmic vesicle membrane. It is found in the presynapse. Functionally, may act as a GTPase-activating protein for Rab family protein(s). Involved in neuronal projections development, probably through a negative modulation of ARF6 function. Involved in the regulation of synaptic vesicle trafficking. The protein is TBC1 domain family member 24 (Tbc1d24) of Mus musculus (Mouse).